A 339-amino-acid polypeptide reads, in one-letter code: Anthranilate phosphoribosyltransferase (339 aa).

5-phospho-alpha-D-ribose 1-diphosphate contacts are provided by residues Gly82, 85-86, Thr90, 92-95, and 110-118; these read GD, NIST, and KHGNRAVSS. Gly82 lines the anthranilate pocket. Mg(2+) is bound at residue Ser94. Positions 113 and 168 each coordinate anthranilate. Mg(2+) is bound by residues Asp227 and Glu228.

It belongs to the anthranilate phosphoribosyltransferase family. Homodimer. Mg(2+) serves as cofactor.

The catalysed reaction is N-(5-phospho-beta-D-ribosyl)anthranilate + diphosphate = 5-phospho-alpha-D-ribose 1-diphosphate + anthranilate. It functions in the pathway amino-acid biosynthesis; L-tryptophan biosynthesis; L-tryptophan from chorismate: step 2/5. In terms of biological role, catalyzes the transfer of the phosphoribosyl group of 5-phosphorylribose-1-pyrophosphate (PRPP) to anthranilate to yield N-(5'-phosphoribosyl)-anthranilate (PRA). The protein is Anthranilate phosphoribosyltransferase of Clostridium beijerinckii (strain ATCC 51743 / NCIMB 8052) (Clostridium acetobutylicum).